The sequence spans 356 residues: MAYKLLIINPGSTSTKIGVYEGEKEILEETLRHSAEEILKYDTIFDQLDFRKEVILKVLKEKGIDINELDAVVGRGGMLKPIEGGTYEVNEAMVEDLKIGVQGPHASNLGGILSNEIAKEIGKRAFIVDPVVVDEMEDVARLSGVPELPRKSKFHALNQKAVAKRYAKEHNTSYEDVNLIVVHMGGGVSVGAHRKGRVIDVNNALDGDGPFSPERAGGVPSGELLEMCFSGKYSKEEVYKKLVGKGGFVAYANTNDARDLIKLSQEGDEKGSLIFNAFIYQIAKEIGSMAVVLDGEVNAIVLTGGIAYSDYVTNAINKKVKWIAPMVVYGGEDELLALAQGAIRVLDGVEEAKIYK.

It belongs to the acetokinase family.

The protein resides in the cytoplasm. The enzyme catalyses butanoate + ATP = butanoyl phosphate + ADP. This is Probable butyrate kinase from Clostridium perfringens (strain SM101 / Type A).